Here is a 215-residue protein sequence, read N- to C-terminus: LexA repressor (215 aa).

Residues 28–48 (RAEIAAELGFSSPNAAEEHLR) constitute a DNA-binding region (H-T-H motif). Catalysis depends on for autocatalytic cleavage activity residues serine 133 and lysine 170.

The protein belongs to the peptidase S24 family. In terms of assembly, homodimer.

It carries out the reaction Hydrolysis of Ala-|-Gly bond in repressor LexA.. Functionally, represses a number of genes involved in the response to DNA damage (SOS response), including recA and lexA. In the presence of single-stranded DNA, RecA interacts with LexA causing an autocatalytic cleavage which disrupts the DNA-binding part of LexA, leading to derepression of the SOS regulon and eventually DNA repair. The sequence is that of LexA repressor from Burkholderia thailandensis (strain ATCC 700388 / DSM 13276 / CCUG 48851 / CIP 106301 / E264).